Consider the following 426-residue polypeptide: Histidine--tRNA ligase (426 aa).

This sequence belongs to the class-II aminoacyl-tRNA synthetase family. In terms of assembly, homodimer.

Its subcellular location is the cytoplasm. It carries out the reaction tRNA(His) + L-histidine + ATP = L-histidyl-tRNA(His) + AMP + diphosphate + H(+). The protein is Histidine--tRNA ligase of Pseudoalteromonas translucida (strain TAC 125).